A 440-amino-acid polypeptide reads, in one-letter code: MTNMSWSFLTRLLEEIHNHSTFVGKVWLTVLVVFRIVLTAVGGESIYSDEQSKFTCNTRQPGCDNVCYDAFAPLSHVRFWVFQIVVISTPSVMYLGYAVHRLARASEQERRRALRRRPGPRRLPRAQLPPPPPGWPDTTDLGEAEPILALEEDEDEEPGAPEGPGEDTEEERTEDVAAKGGGGDGKTVVTPGPAGQHDGRRRIQREGLMRVYVAQLVVRAAFEVAFLVGQYLLYGFEVPPFFACSRQPCPHVVDCFVSRPTEKTVFLLVMYVVSCLCLLLNLCEMAHLGLGSAQDAVRGRRGASAAGPGPAPRPPPCAFPAAAAGLACPPDYSLVVRAAERARAHDQNLANLALQALRDGAAVAAVSADRDSPPCSGLNATSRGPPRAGGPASGTGSATSGGTVGEQGRSGAQEQLATKPRVGSEKGSTGSRDGKATVWI.

At Met-1 to Thr-21 the chain is on the cytoplasmic side. The helical transmembrane segment at Phe-22 to Gly-42 threads the bilayer. The Extracellular segment spans residues Gly-43–Arg-78. A helical transmembrane segment spans residues Phe-79–Val-99. Topologically, residues His-100–Glu-223 are cytoplasmic. Residues Gln-108–Gly-199 form a disordered region. Over residues Arg-112–Pro-124 the composition is skewed to basic residues. Positions Leu-150–Thr-173 are enriched in acidic residues. A helical membrane pass occupies residues Val-224–Cys-244. The Extracellular segment spans residues Ser-245 to Thr-264. A helical membrane pass occupies residues Val-265–Met-285. Residues Ala-286–Ile-440 are Cytoplasmic-facing. Positions Ala-368 to Ile-440 are disordered. Ser-372 is subject to Phosphoserine. The segment covering Ala-380–Gly-401 has biased composition (low complexity).

Belongs to the connexin family. Gamma-type subfamily. As to quaternary structure, a connexon is composed of a hexamer of connexins. Interacts with TJP1. In terms of tissue distribution, mainly expressed by oligodendrocytes in the central nervous system. Expressed in optic nerve (at protein level).

Its subcellular location is the cell membrane. It localises to the cell junction. The protein localises to the gap junction. Its function is as follows. One gap junction consists of a cluster of closely packed pairs of transmembrane channels, the connexons, through which materials of low MW diffuse from one cell to a neighboring cell. May play a role in myelination in central and peripheral nervous systems. The polypeptide is Gap junction gamma-2 protein (Gjc2) (Rattus norvegicus (Rat)).